The chain runs to 467 residues: UDP-N-acetylmuramate--L-alanine ligase (467 aa).

Residue 121–127 participates in ATP binding; it reads GSHGKTT.

The protein belongs to the MurCDEF family.

It is found in the cytoplasm. It carries out the reaction UDP-N-acetyl-alpha-D-muramate + L-alanine + ATP = UDP-N-acetyl-alpha-D-muramoyl-L-alanine + ADP + phosphate + H(+). It functions in the pathway cell wall biogenesis; peptidoglycan biosynthesis. Its function is as follows. Cell wall formation. This is UDP-N-acetylmuramate--L-alanine ligase from Parasynechococcus marenigrum (strain WH8102).